The following is a 132-amino-acid chain: Protein KRTCAP2 homolog (132 aa).

4 consecutive transmembrane segments (helical) span residues 1-21 (MAVPTSVSLVLASVTAVLIFS), 35-55 (MATVFGGFLGSWLFILSLTAV), 69-89 (AKLFPEVAFCLIGSLFACGMV), and 92-109 (VCATTCILFSVAALYYIN).

The protein belongs to the KRTCAP2 family. In terms of assembly, component of the oligosaccharyltransferase (OST) complex.

The protein resides in the membrane. In terms of biological role, subunit of the oligosaccharyl transferase (OST) complex that catalyzes the initial transfer of a defined glycan (Glc(3)Man(9)GlcNAc(2) in eukaryotes) from the lipid carrier dolichol-pyrophosphate to an asparagine residue within an Asn-X-Ser/Thr consensus motif in nascent polypeptide chains, the first step in protein N-glycosylation. N-glycosylation occurs cotranslationally and the complex associates with the Sec61 complex at the channel-forming translocon complex that mediates protein translocation across the endoplasmic reticulum (ER). All subunits are required for a maximal enzyme activity. The polypeptide is Protein KRTCAP2 homolog (Aedes aegypti (Yellowfever mosquito)).